Here is a 94-residue protein sequence, read N- to C-terminus: ATP synthase F(0) complex subunit f, mitochondrial (94 aa).

Position 2 is an N-acetylalanine (Ala2). Ser3 bears the Phosphoserine mark. Lys22 bears the N6-acetyllysine mark. The chain crosses the membrane as a helical span at residues 68 to 85; it reads MVLACYVLFSYSFSYKHL.

This sequence belongs to the ATPase F chain family. Component of the ATP synthase complex composed at least of ATP5F1A/subunit alpha, ATP5F1B/subunit beta, ATP5MC1/subunit c (homooctomer), MT-ATP6/subunit a, MT-ATP8/subunit 8, ATP5ME/subunit e, ATP5MF/subunit f, ATP5MG/subunit g, ATP5MK/subunit k, ATP5MJ/subunit j, ATP5F1C/subunit gamma, ATP5F1D/subunit delta, ATP5F1E/subunit epsilon, ATP5PF/subunit F6, ATP5PB/subunit b, ATP5PD/subunit d, ATP5PO/subunit OSCP. ATP synthase complex consists of a soluble F(1) head domain (subunits alpha(3) and beta(3)) - the catalytic core - and a membrane F(0) domain - the membrane proton channel (subunits c, a, 8, e, f, g, k and j). These two domains are linked by a central stalk (subunits gamma, delta, and epsilon) rotating inside the F1 region and a stationary peripheral stalk (subunits F6, b, d, and OSCP).

Its subcellular location is the mitochondrion. The protein resides in the mitochondrion inner membrane. In terms of biological role, subunit f, of the mitochondrial membrane ATP synthase complex (F(1)F(0) ATP synthase or Complex V) that produces ATP from ADP in the presence of a proton gradient across the membrane which is generated by electron transport complexes of the respiratory chain. ATP synthase complex consist of a soluble F(1) head domain - the catalytic core - and a membrane F(1) domain - the membrane proton channel. These two domains are linked by a central stalk rotating inside the F(1) region and a stationary peripheral stalk. During catalysis, ATP synthesis in the catalytic domain of F(1) is coupled via a rotary mechanism of the central stalk subunits to proton translocation. In vivo, can only synthesize ATP although its ATP hydrolase activity can be activated artificially in vitro. Part of the complex F(0) domain. This is ATP synthase F(0) complex subunit f, mitochondrial from Homo sapiens (Human).